A 273-amino-acid polypeptide reads, in one-letter code: Ribosomal RNA small subunit methyltransferase A (273 aa).

S-adenosyl-L-methionine contacts are provided by N18, L20, G45, E66, D91, and N113.

It belongs to the class I-like SAM-binding methyltransferase superfamily. rRNA adenine N(6)-methyltransferase family. RsmA subfamily.

It localises to the cytoplasm. The enzyme catalyses adenosine(1518)/adenosine(1519) in 16S rRNA + 4 S-adenosyl-L-methionine = N(6)-dimethyladenosine(1518)/N(6)-dimethyladenosine(1519) in 16S rRNA + 4 S-adenosyl-L-homocysteine + 4 H(+). Functionally, specifically dimethylates two adjacent adenosines (A1518 and A1519) in the loop of a conserved hairpin near the 3'-end of 16S rRNA in the 30S particle. May play a critical role in biogenesis of 30S subunits. This chain is Ribosomal RNA small subunit methyltransferase A, found in Enterobacter sp. (strain 638).